We begin with the raw amino-acid sequence, 491 residues long: Zinc finger and SCAN domain-containing protein 22 (491 aa).

Position 9 is a phosphoserine (Ser-9). Positions 49 to 131 constitute an SCAN box domain; it reads RLRFRHFRYE…VLVEDLTQVL (83 aa). Disordered stretches follow at residues 134-161 and 204-249; these read RGWD…SNVT and FKKT…DKFD. The span at 214–224 shows a compositional bias: basic and acidic residues; it reads VPTDQRGRESG. Polar residues predominate over residues 225-241; it reads ASRNSSSAWPNLTSQEK. 8 consecutive C2H2-type zinc fingers follow at residues 268-290, 296-318, 324-346, 352-374, 380-402, 408-430, 436-458, and 464-486; these read SKCR…QKTH, YACS…QVVH, HECK…QRIH, YKCG…QRVH, YECD…QRIH, YKCD…LRIH, YQCK…QRIH, and YKCS…LRIH. Residue Lys-443 forms a Glycyl lysine isopeptide (Lys-Gly) (interchain with G-Cter in SUMO2) linkage.

It belongs to the krueppel C2H2-type zinc-finger protein family.

The protein localises to the nucleus. In terms of biological role, may be involved in transcriptional regulation. The protein is Zinc finger and SCAN domain-containing protein 22 (ZSCAN22) of Homo sapiens (Human).